A 60-amino-acid polypeptide reads, in one-letter code: Large ribosomal subunit protein eL37 (60 aa).

Zn(2+) is bound by residues cysteine 19, cysteine 22, cysteine 34, and cysteine 37. The segment at 19 to 37 (CRRCGSISYHARHKVCSAC) adopts a C4-type zinc-finger fold.

It belongs to the eukaryotic ribosomal protein eL37 family. The cofactor is Zn(2+).

Its function is as follows. Binds to the 23S rRNA. The chain is Large ribosomal subunit protein eL37 from Methanosphaerula palustris (strain ATCC BAA-1556 / DSM 19958 / E1-9c).